The following is a 103-amino-acid chain: Small ribosomal subunit protein uS10 (103 aa).

It belongs to the universal ribosomal protein uS10 family. As to quaternary structure, part of the 30S ribosomal subunit.

Its function is as follows. Involved in the binding of tRNA to the ribosomes. In Clostridioides difficile (strain 630) (Peptoclostridium difficile), this protein is Small ribosomal subunit protein uS10.